Here is a 340-residue protein sequence, read N- to C-terminus: MLSLSKNWNTLIKPNRVTYENFPETNNKAKIIVEPLERGFGLTLGNAMRRVLLSSLQGAAITSIKIPAIEHEFSSIPGVQEDVSEVILNIKGIEVKMHVSEKRIIKLKAMGPCVVTAGMIDTGHDVEILNPDHVICNLAKNKQLEMELTCKVGKGYVLSTNSYEDNLPIGEIAIDALFNPVKSVTYKVENTRVGQVTDYDKLIMFVETNGDVLPEMAVGLAARILQEQLQLFIAFEEQEEDKQVKTDSLPFSPYLLKRVDELELSVRSANCLKNDNIIYIGDLVKRTESDMLRTPNFGRKSLNEIKEILAKFNLRFGMDVPDWPPENIQELSKRYEDSYN.

The interval M1–E236 is alpha N-terminal domain (alpha-NTD). The segment at F251 to N340 is alpha C-terminal domain (alpha-CTD).

This sequence belongs to the RNA polymerase alpha chain family. In terms of assembly, homodimer. The RNAP catalytic core consists of 2 alpha, 1 beta, 1 beta' and 1 omega subunit. When a sigma factor is associated with the core the holoenzyme is formed, which can initiate transcription.

It catalyses the reaction RNA(n) + a ribonucleoside 5'-triphosphate = RNA(n+1) + diphosphate. DNA-dependent RNA polymerase catalyzes the transcription of DNA into RNA using the four ribonucleoside triphosphates as substrates. This chain is DNA-directed RNA polymerase subunit alpha, found in Rickettsia prowazekii (strain Madrid E).